The primary structure comprises 372 residues: tRNA-specific 2-thiouridylase MnmA 1 (372 aa).

Residues 26–33 and Met-52 contribute to the ATP site; that span reads AISGGVDS. Cys-118 (nucleophile) is an active-site residue. A disulfide bond links Cys-118 and Cys-214. Position 142 (Gly-142) interacts with ATP. Positions 164–166 are interaction with tRNA; it reads KDQ. The active-site Cysteine persulfide intermediate is the Cys-214.

Belongs to the MnmA/TRMU family.

It is found in the cytoplasm. The catalysed reaction is S-sulfanyl-L-cysteinyl-[protein] + uridine(34) in tRNA + AH2 + ATP = 2-thiouridine(34) in tRNA + L-cysteinyl-[protein] + A + AMP + diphosphate + H(+). Its function is as follows. Catalyzes the 2-thiolation of uridine at the wobble position (U34) of tRNA, leading to the formation of s(2)U34. In Syntrophus aciditrophicus (strain SB), this protein is tRNA-specific 2-thiouridylase MnmA 1.